Reading from the N-terminus, the 703-residue chain is Bifunctional arginine dihydrolase/ornithine cyclodeaminase AgrE (703 aa).

Residues 10–269 are arginine dihydrolase; the sequence is CPPDHYDVDY…GAAKCLTLRV (260 aa). Positions 22, 65, 71, 90, and 139 each coordinate L-arginine. Asn-22 serves as a coordination point for L-ornithine. L-ornithine contacts are provided by Arg-90, Arg-139, and His-168. His-168 acts as the Proton donor/acceptor in catalysis. Positions 170 and 258 each coordinate L-arginine. Cys-264 serves as a coordination point for L-ornithine. Cys-264 functions as the Nucleophile in the catalytic mechanism. An ornithine cyclodeaminase region spans residues 285 to 694; sequence SRIIRIEGHL…SLLTQQLDKL (410 aa). NAD(+) is bound by residues Asn-524, Ala-525, Asp-603, Ser-635, Met-636, Leu-637, His-638, Asp-656, Asp-679, and Val-680.

The protein in the N-terminal section; belongs to the DDAH family. In the C-terminal section; belongs to the AgrE/ArgZ ornithine cyclodeaminase family. In terms of assembly, homotetramer. It depends on NAD(+) as a cofactor.

The enzyme catalyses L-arginine + 2 H2O + 2 H(+) = L-ornithine + 2 NH4(+) + CO2. It carries out the reaction L-ornithine = L-proline + NH4(+). Its activity is regulated as follows. Ornithine cyclodeaminase activity is inhibited by ATP. Bifunctional enzyme involved in a cyanobacterial arginine utilization pathway that produces glutamate and enables cellular adaptation to nitrogen fluctuations. Catalyzes the hydrolysis of arginine to ornithine, with the release of ammonia and carbon dioxide. Then, catalyzes the conversion of ornithine to proline, with the release of ammonia. This Nostoc sp. (strain PCC 7120 / SAG 25.82 / UTEX 2576) protein is Bifunctional arginine dihydrolase/ornithine cyclodeaminase AgrE.